The following is a 250-amino-acid chain: 2,3-bisphosphoglycerate-dependent phosphoglycerate mutase (250 aa).

Substrate-binding positions include 8–15, 21–22, Arg-60, 87–90, Lys-98, 114–115, and 183–184; these read RHGESQWN, TG, ERHY, RR, and GN. His-9 serves as the catalytic Tele-phosphohistidine intermediate. Residue Glu-87 is the Proton donor/acceptor of the active site.

Belongs to the phosphoglycerate mutase family. BPG-dependent PGAM subfamily. As to quaternary structure, homodimer.

It catalyses the reaction (2R)-2-phosphoglycerate = (2R)-3-phosphoglycerate. It participates in carbohydrate degradation; glycolysis; pyruvate from D-glyceraldehyde 3-phosphate: step 3/5. Catalyzes the interconversion of 2-phosphoglycerate and 3-phosphoglycerate. This is 2,3-bisphosphoglycerate-dependent phosphoglycerate mutase from Bordetella petrii (strain ATCC BAA-461 / DSM 12804 / CCUG 43448).